We begin with the raw amino-acid sequence, 394 residues long: Elongation factor Tu (394 aa).

The tr-type G domain occupies 10 to 205 (KPHVNIGTIG…VDTWIPLPPR (196 aa)). The interval 19–26 (GHVDHGKT) is G1. 19–26 (GHVDHGKT) is a GTP binding site. Residue threonine 26 participates in Mg(2+) binding. The G2 stretch occupies residues 60 to 64 (GITIN). Residues 81–84 (DCPG) are G3. Residues 81–85 (DCPGH) and 136–139 (NKCD) each bind GTP. The tract at residues 136-139 (NKCD) is G4. A G5 region spans residues 174–176 (SAL).

The protein belongs to the TRAFAC class translation factor GTPase superfamily. Classic translation factor GTPase family. EF-Tu/EF-1A subfamily. Monomer.

Its subcellular location is the cytoplasm. It carries out the reaction GTP + H2O = GDP + phosphate + H(+). Functionally, GTP hydrolase that promotes the GTP-dependent binding of aminoacyl-tRNA to the A-site of ribosomes during protein biosynthesis. This chain is Elongation factor Tu, found in Bacteroides fragilis (strain ATCC 25285 / DSM 2151 / CCUG 4856 / JCM 11019 / LMG 10263 / NCTC 9343 / Onslow / VPI 2553 / EN-2).